Consider the following 391-residue polypeptide: Polyketide synthase 5 (391 aa).

The active site involves cysteine 164.

This sequence belongs to the thiolase-like superfamily. Chalcone/stilbene synthases family. In terms of assembly, homodimer. As to expression, expressed in fruits.

The catalysed reaction is (E)-4-coumaroyl-CoA + 3 malonyl-CoA + 3 H(+) = 2',4,4',6'-tetrahydroxychalcone + 3 CO2 + 4 CoA. It functions in the pathway secondary metabolite biosynthesis; flavonoid biosynthesis. Functionally, polyketide synthase producing naringenin chalcone. Can use p-coumaryl-CoA as substrate. The sequence is that of Polyketide synthase 5 (PKS5) from Rubus idaeus (Raspberry).